The primary structure comprises 788 residues: Endonuclease MutS2 (788 aa).

Residue 332–339 coordinates ATP; the sequence is GPNTGGKT. Positions 713-788 constitute a Smr domain; sequence VDLRGMDAEE…GTGVTVVELK (76 aa).

The protein belongs to the DNA mismatch repair MutS family. MutS2 subfamily. Homodimer. Binds to stalled ribosomes, contacting rRNA.

Its function is as follows. Endonuclease that is involved in the suppression of homologous recombination and thus may have a key role in the control of bacterial genetic diversity. Functionally, acts as a ribosome collision sensor, splitting the ribosome into its 2 subunits. Detects stalled/collided 70S ribosomes which it binds and splits by an ATP-hydrolysis driven conformational change. Acts upstream of the ribosome quality control system (RQC), a ribosome-associated complex that mediates the extraction of incompletely synthesized nascent chains from stalled ribosomes and their subsequent degradation. Probably generates substrates for RQC. The chain is Endonuclease MutS2 from Clostridium botulinum (strain Langeland / NCTC 10281 / Type F).